The sequence spans 293 residues: Magnetosome protein MamB (293 aa).

At 1–12 the chain is on the cytoplasmic side; it reads MTTAACRKCRDE. A transmembrane domain (TMD) region spans residues 1-214; it reads MTTAACRKCR…GLMDTSVEND (214 aa). Residues 13–33 form a helical membrane-spanning segment; the sequence is VIWWAFFINIGQTTYKGVLGV. Residues 34–78 are Lumenal-facing; that stretch reads LSGSAALVADAMHSGADVVATLVTMFSVKVSDKKADEKYPFGYGN. The chain crosses the membrane as a helical span at residues 79–99; sequence IQFIASSIVGLILFFGALYLM. Over 100–105 the chain is Cytoplasmic; the sequence is YESTMQ. A helical transmembrane segment spans residues 106–126; that stretch reads IIAGNTSSPSPFAVLGAIVSI. The Lumenal segment spans residues 127–158; the sequence is ATNELMFRYQSCVGRQNNSPAIIANAWDNRSD. A helical transmembrane segment spans residues 159–179; that stretch reads ALSSVAVLIGIVAAVVGFPIA. Residues 180-293 are Cytoplasmic-facing; the sequence is DRLAAIGVGI…VGVTPVRIAA (114 aa). The C-terminal domain (CTD) stretch occupies residues 215-293; sequence VLVDAYNIAK…VGVTPVRIAA (79 aa). The Zn(2+) site is built by H245, D247, and H283.

Belongs to the cation diffusion facilitator (CDF) transporter (TC 2.A.4) family. As to quaternary structure, the isolated C-terminal domain (approximately 213-293) forms homodimers. Forms heterodimers with MamM.

It is found in the magnetosome membrane. Its function is as follows. Plays a dual, essential role in magnetosome formation; required for magnetosome vesicle formation as well as biomineralization. Probably binds and transports iron. Requires heterodimerization with MamM for stability. The sequence is that of Magnetosome protein MamB (mamB) from Magnetospira sp. (strain QH-2) (Marine magnetic spirillum (strain QH-2)).